Consider the following 252-residue polypeptide: Large ribosomal subunit protein uL10m (252 aa).

Residues 1-24 (MAATLCCRLLPKAGWVPLTQSVRH) constitute a mitochondrion transit peptide.

This sequence belongs to the universal ribosomal protein uL10 family. In terms of assembly, component of the mitochondrial ribosome large subunit (39S) which comprises a 16S rRNA and about 50 distinct proteins.

The protein resides in the mitochondrion. The protein is Large ribosomal subunit protein uL10m (mrpl10) of Danio rerio (Zebrafish).